A 500-amino-acid chain; its full sequence is Glycerol kinase (500 aa).

Position 13 (Thr13) interacts with ADP. ATP-binding residues include Thr13, Thr14, and Ser15. Thr13 lines the sn-glycerol 3-phosphate pocket. Position 17 (Arg17) interacts with ADP. The sn-glycerol 3-phosphate site is built by Arg83, Glu84, Tyr135, and Asp244. Positions 83, 84, 135, 244, and 245 each coordinate glycerol. ADP-binding residues include Thr266 and Gly309. Residues Thr266, Gly309, Gln313, and Gly410 each coordinate ATP. Residues Gly410 and Asn414 each coordinate ADP.

The protein belongs to the FGGY kinase family.

It carries out the reaction glycerol + ATP = sn-glycerol 3-phosphate + ADP + H(+). Its pathway is polyol metabolism; glycerol degradation via glycerol kinase pathway; sn-glycerol 3-phosphate from glycerol: step 1/1. With respect to regulation, inhibited by fructose 1,6-bisphosphate (FBP). Key enzyme in the regulation of glycerol uptake and metabolism. Catalyzes the phosphorylation of glycerol to yield sn-glycerol 3-phosphate. In Burkholderia vietnamiensis (strain G4 / LMG 22486) (Burkholderia cepacia (strain R1808)), this protein is Glycerol kinase.